Here is a 148-residue protein sequence, read N- to C-terminus: uncharacterized protein (148 aa).

The 62-residue stretch at 3–64 folds into the HTH asnC-type domain; it reads LDALDRKILE…KLNYESIGYD (62 aa). Positions 22-41 form a DNA-binding region, H-T-H motif; it reads YREIAKDLNVAVGTIYNRIK.

This is an uncharacterized protein from Pyrococcus horikoshii (strain ATCC 700860 / DSM 12428 / JCM 9974 / NBRC 100139 / OT-3).